Consider the following 394-residue polypeptide: Bifunctional enzyme Fae/Hps (394 aa).

The interval 1–162 is formaldehyde-activating enzyme; it reads MEFRIGEALI…YEKDRSFHPF (162 aa). Catalysis depends on histidine 18, which acts as the Proton donor. The substrate site is built by aspartate 20, leucine 49, lysine 67, threonine 69, and glutamine 84. The 3-hexulose-6-phosphate synthase stretch occupies residues 163 to 394; that stretch reads VGRKLTKLWD…TDQFRIMTDF (232 aa).

The protein in the N-terminal section; belongs to the formaldehyde-activating enzyme family. This sequence in the C-terminal section; belongs to the HPS/KGPDC family. HPS subfamily.

The catalysed reaction is 5,6,7,8-tetrahydromethanopterin + formaldehyde = 5,10-methylenetetrahydromethanopterin + H2O. It catalyses the reaction D-ribulose 5-phosphate + formaldehyde = D-arabino-hex-3-ulose 6-phosphate. It functions in the pathway carbohydrate biosynthesis; D-ribose 5-phosphate biosynthesis. Its function is as follows. Catalyzes the condensation of formaldehyde with tetrahydromethanopterin (H(4)MPT) to 5,10-methylenetetrahydromethanopterin. Functionally, catalyzes the reversible formation of ribulose-5-phosphate and formaldehyde from 3-hexulose-6-phosphate. This chain is Bifunctional enzyme Fae/Hps, found in Archaeoglobus fulgidus (strain ATCC 49558 / DSM 4304 / JCM 9628 / NBRC 100126 / VC-16).